A 657-amino-acid polypeptide reads, in one-letter code: Methylenetetrahydrofolate reductase 1 (657 aa).

Catalysis depends on Glu18, which acts as the Proton donor/acceptor. Residues 18–23 (EFFPPK) and 49–50 (TW) each bind NAD(+). FAD is bound by residues 49–50 (TW), His78, and 108–110 (RGD). Substrate is bound at residue Asp110. Ser120 bears the Phosphoserine mark. Residues 129-130 (YA), Tyr152, Asp171, and Lys178 contribute to the FAD site. Residues Gln189 and Tyr286 each coordinate substrate. Ser301 bears the Phosphoserine mark. Residues 308 to 329 (VNESSEEEGEDETSGEIGSIEN) form a disordered region. The span at 311–321 (SSEEEGEDETS) shows a compositional bias: acidic residues. Ser358 carries the phosphoserine modification.

It belongs to the methylenetetrahydrofolate reductase family. It depends on FAD as a cofactor.

The enzyme catalyses (6S)-5-methyl-5,6,7,8-tetrahydrofolate + NADP(+) = (6R)-5,10-methylene-5,6,7,8-tetrahydrofolate + NADPH + H(+). It catalyses the reaction (6S)-5-methyl-5,6,7,8-tetrahydrofolate + NAD(+) = (6R)-5,10-methylene-5,6,7,8-tetrahydrofolate + NADH + H(+). The protein operates within one-carbon metabolism; tetrahydrofolate interconversion. This chain is Methylenetetrahydrofolate reductase 1 (MET12), found in Saccharomyces cerevisiae (strain ATCC 204508 / S288c) (Baker's yeast).